The following is a 95-amino-acid chain: Large ribosomal subunit protein bL25 (95 aa).

Belongs to the bacterial ribosomal protein bL25 family. Part of the 50S ribosomal subunit; part of the 5S rRNA/L5/L18/L25 subcomplex. Contacts the 5S rRNA. Binds to the 5S rRNA independently of L5 and L18.

Functionally, this is one of the proteins that binds to the 5S RNA in the ribosome where it forms part of the central protuberance. This is Large ribosomal subunit protein bL25 from Aeromonas salmonicida (strain A449).